The primary structure comprises 502 residues: Histidine--tRNA ligase (502 aa).

It belongs to the class-II aminoacyl-tRNA synthetase family. Homodimer.

Its subcellular location is the cytoplasm. It carries out the reaction tRNA(His) + L-histidine + ATP = L-histidyl-tRNA(His) + AMP + diphosphate + H(+). The polypeptide is Histidine--tRNA ligase (Brucella abortus (strain S19)).